The primary structure comprises 381 residues: Cobalt-precorrin-5B C(1)-methyltransferase (381 aa).

Belongs to the CbiD family.

The enzyme catalyses Co-precorrin-5B + S-adenosyl-L-methionine = Co-precorrin-6A + S-adenosyl-L-homocysteine. It functions in the pathway cofactor biosynthesis; adenosylcobalamin biosynthesis; cob(II)yrinate a,c-diamide from sirohydrochlorin (anaerobic route): step 6/10. Catalyzes the methylation of C-1 in cobalt-precorrin-5B to form cobalt-precorrin-6A. The chain is Cobalt-precorrin-5B C(1)-methyltransferase from Clostridium botulinum (strain Eklund 17B / Type B).